The primary structure comprises 101 residues: Large ribosomal subunit protein uL23 (101 aa).

Belongs to the universal ribosomal protein uL23 family. In terms of assembly, part of the 50S ribosomal subunit. Contacts protein L29, and trigger factor when it is bound to the ribosome.

Its function is as follows. One of the early assembly proteins it binds 23S rRNA. One of the proteins that surrounds the polypeptide exit tunnel on the outside of the ribosome. Forms the main docking site for trigger factor binding to the ribosome. This chain is Large ribosomal subunit protein uL23, found in Synechocystis sp. (strain ATCC 27184 / PCC 6803 / Kazusa).